Consider the following 248-residue polypeptide: DNA repair protein RecO (248 aa).

It belongs to the RecO family.

In terms of biological role, involved in DNA repair and RecF pathway recombination. The sequence is that of DNA repair protein RecO from Bradyrhizobium sp. (strain BTAi1 / ATCC BAA-1182).